The chain runs to 316 residues: MTTASNTPLPSGLRKPLDQFYEYLRAEKGLSLHTQRNYKQQLETMAEHLHSMGLKAWPQVDAGWVRQLAGKGMREGMKASSIATRLSSLRSFFDFLILRGILTANPAKGVSAPRKKRPLPKNLDVDEVNQLLEVNEDDPLAIRDRAIMELMYGAGLRLAELVDIDVRDVHLRSGEIRVIGKGNKERKVPFAGMAVEWVGKWLKVRSGLADPSEPALFVSKLGTRISHRSVQKRMAEWGQKQAVASHITPHKLRHSFATHILESSNNLRAVQELLGHENISTTQIYTHLDFQHLADVYDQAHPRARKKSSQHKEEDE.

The Core-binding (CB) domain occupies 11-97; that stretch reads SGLRKPLDQF…SLRSFFDFLI (87 aa). The region spanning 118-298 is the Tyr recombinase domain; it reads PLPKNLDVDE…DFQHLADVYD (181 aa). Active-site residues include arginine 157, lysine 181, histidine 250, arginine 253, and histidine 276. The O-(3'-phospho-DNA)-tyrosine intermediate role is filled by tyrosine 285.

Belongs to the 'phage' integrase family. XerC subfamily. Forms a cyclic heterotetrameric complex composed of two molecules of XerC and two molecules of XerD.

It is found in the cytoplasm. In terms of biological role, site-specific tyrosine recombinase, which acts by catalyzing the cutting and rejoining of the recombining DNA molecules. The XerC-XerD complex is essential to convert dimers of the bacterial chromosome into monomers to permit their segregation at cell division. It also contributes to the segregational stability of plasmids. The sequence is that of Tyrosine recombinase XerC from Vibrio vulnificus (strain CMCP6).